A 122-amino-acid chain; its full sequence is Large ribosomal subunit protein uL14 (122 aa).

It belongs to the universal ribosomal protein uL14 family. Part of the 50S ribosomal subunit. Forms a cluster with proteins L3 and L19. In the 70S ribosome, L14 and L19 interact and together make contacts with the 16S rRNA in bridges B5 and B8.

Functionally, binds to 23S rRNA. Forms part of two intersubunit bridges in the 70S ribosome. This Orientia tsutsugamushi (strain Ikeda) (Rickettsia tsutsugamushi) protein is Large ribosomal subunit protein uL14.